Here is a 307-residue protein sequence, read N- to C-terminus: Protein pxr1 (307 aa).

Residues 1–11 (MGLAAPRKKTK) are compositionally biased toward basic residues. Disordered regions lie at residues 1 to 25 (MGLA…SRST) and 144 to 234 (NATA…SDCD). The span at 15–25 (DPNNTSWSRST) shows a compositional bias: polar residues. Residues 25–79 (TDGFGHRILKAQGWTPGGFLGARNATHSDLFTTASASHIRVVLKDDTLGLGARPK) form the G-patch domain. Composition is skewed to basic and acidic residues over residues 154 to 168 (LRVD…HESE) and 206 to 221 (GKEL…EKKQ).

Belongs to the PINX1 family.

It is found in the nucleus. The protein localises to the nucleolus. Involved in rRNA-processing at A0, A1 and A2 sites and negatively regulates telomerase. The polypeptide is Protein pxr1 (pxr1) (Neosartorya fischeri (strain ATCC 1020 / DSM 3700 / CBS 544.65 / FGSC A1164 / JCM 1740 / NRRL 181 / WB 181) (Aspergillus fischerianus)).